Here is a 321-residue protein sequence, read N- to C-terminus: Nitrilase blr3397 (321 aa).

A CN hydrolase domain is found at 10–277 (YKAAVVQAAS…ETILYADIAL (268 aa)). The active-site Proton acceptor is Glu50. Lys137 acts as the Proton donor in catalysis. The active-site Nucleophile is Cys171.

It belongs to the carbon-nitrogen hydrolase superfamily. Nitrilase family. Homodecamer.

It catalyses the reaction an aliphatic nitrile + 2 H2O = a carboxylate + NH4(+). In terms of biological role, nitrilase that acts on various kinds of nitrile compounds such as aliphatic and aromatic nitriles. Has higher activity toward aliphatic nitriles compared to aromatic nitriles. Among the different substrates tested, has the highest activity toward hydrocinnamonitrile. The polypeptide is Nitrilase blr3397 (Bradyrhizobium diazoefficiens (strain JCM 10833 / BCRC 13528 / IAM 13628 / NBRC 14792 / USDA 110)).